Consider the following 120-residue polypeptide: Large ribosomal subunit protein uL22 (120 aa).

Belongs to the universal ribosomal protein uL22 family. As to quaternary structure, part of the 50S ribosomal subunit.

Functionally, this protein binds specifically to 23S rRNA; its binding is stimulated by other ribosomal proteins, e.g. L4, L17, and L20. It is important during the early stages of 50S assembly. It makes multiple contacts with different domains of the 23S rRNA in the assembled 50S subunit and ribosome. Its function is as follows. The globular domain of the protein is located near the polypeptide exit tunnel on the outside of the subunit, while an extended beta-hairpin is found that lines the wall of the exit tunnel in the center of the 70S ribosome. The chain is Large ribosomal subunit protein uL22 from Corynebacterium glutamicum (strain R).